We begin with the raw amino-acid sequence, 276 residues long: Integrin-binding sialoprotein (276 aa).

An N-terminal signal peptide occupies residues methionine 1–alanine 16. A disordered region spans residues histidine 54–arginine 251. A compositionally biased stretch (acidic residues) spans serine 61–glycine 75. Positions glutamine 106 to serine 119 are enriched in basic and acidic residues. The short motif at arginine 116–aspartate 118 is the Cell attachment site element. Over residues glycine 120–aspartate 144 the composition is skewed to acidic residues. Residues valine 145–valine 165 are compositionally biased toward polar residues. Asparagine 148, asparagine 153, and asparagine 162 each carry an N-linked (GlcNAc...) asparagine glycan. A compositionally biased stretch (acidic residues) spans alanine 167–glutamate 188. Positions alanine 189–glutamate 200 are enriched in low complexity. The Cell attachment site motif lies at arginine 228 to aspartate 230. The short motif at arginine 246–aspartate 248 is the Integrin-binding motif element. 2 positions are modified to sulfotyrosine: tyrosine 272 and tyrosine 273.

In terms of assembly, monomer. Interacts with integrins; the interaction promotes cell adhesion. Phosphorylated on serine and threonine residues.

It is found in the secreted. Binds tightly to hydroxyapatite. Appears to form an integral part of the mineralized matrix. Probably important to cell-matrix interaction. Promotes adhesion and migration of various cells via the alpha-V/beta-3 integrin receptor (ITGAV:ITGB3). In Gallus gallus (Chicken), this protein is Integrin-binding sialoprotein (IBSP).